Here is a 245-residue protein sequence, read N- to C-terminus: 1-(5-phosphoribosyl)-5-[(5-phosphoribosylamino)methylideneamino] imidazole-4-carboxamide isomerase (245 aa).

The Proton acceptor role is filled by Asp7. The Proton donor role is filled by Asp129.

It belongs to the HisA/HisF family.

The protein localises to the cytoplasm. It carries out the reaction 1-(5-phospho-beta-D-ribosyl)-5-[(5-phospho-beta-D-ribosylamino)methylideneamino]imidazole-4-carboxamide = 5-[(5-phospho-1-deoxy-D-ribulos-1-ylimino)methylamino]-1-(5-phospho-beta-D-ribosyl)imidazole-4-carboxamide. The protein operates within amino-acid biosynthesis; L-histidine biosynthesis; L-histidine from 5-phospho-alpha-D-ribose 1-diphosphate: step 4/9. The chain is 1-(5-phosphoribosyl)-5-[(5-phosphoribosylamino)methylideneamino] imidazole-4-carboxamide isomerase from Proteus mirabilis (strain HI4320).